Consider the following 28-residue polypeptide: Small integral membrane protein 47 (28 aa).

A helical transmembrane segment spans residues 7-24 (VTLAMALFTILTSIYFFN).

It is found in the membrane. This chain is Small integral membrane protein 47, found in Homo sapiens (Human).